A 310-amino-acid chain; its full sequence is E3 ubiquitin-protein ligase AIP2 (310 aa).

The segment at 230 to 271 (CCICKENLVIGDKMQELPCKHTFHPPCLKPWLDEHNSCPICR) adopts an RING-type; atypical zinc-finger fold. Positions 276–306 (TDDQKYENWKEREKEAEEERKGAENAVRGGE) form a coiled coil. The segment covering 285 to 298 (KEREKEAEEERKGA) has biased composition (basic and acidic residues). Residues 285–310 (KEREKEAEEERKGAENAVRGGEYMYV) form a disordered region.

As to quaternary structure, interacts with ABI3 (via C-terminus). Post-translationally, auto-ubiquitinated. As to expression, highly expressed in leaves and at lower levels in flowers and seeds.

The protein resides in the nucleus. The protein localises to the cytoplasm. The enzyme catalyses S-ubiquitinyl-[E2 ubiquitin-conjugating enzyme]-L-cysteine + [acceptor protein]-L-lysine = [E2 ubiquitin-conjugating enzyme]-L-cysteine + N(6)-ubiquitinyl-[acceptor protein]-L-lysine.. It functions in the pathway protein modification; protein ubiquitination. Functionally, E3 ubiquitin-protein ligase that acts as a negative regulator of abscisic acid (ABA) signaling. Mediates ubiquitination and subsequent proteasomal degradation of the transcription factor ABI3. The chain is E3 ubiquitin-protein ligase AIP2 (AIP2) from Arabidopsis thaliana (Mouse-ear cress).